The primary structure comprises 332 residues: Glyceraldehyde-3-phosphate dehydrogenase (332 aa).

Residues 12-13 (RI), aspartate 34, lysine 78, and threonine 120 contribute to the NAD(+) site. D-glyceraldehyde 3-phosphate contacts are provided by residues 149 to 151 (SCT), threonine 180, 209 to 210 (TG), and arginine 232. The active-site Nucleophile is the cysteine 150. Asparagine 314 provides a ligand contact to NAD(+).

The protein belongs to the glyceraldehyde-3-phosphate dehydrogenase family. As to quaternary structure, homotetramer.

The protein localises to the cytoplasm. The catalysed reaction is D-glyceraldehyde 3-phosphate + phosphate + NAD(+) = (2R)-3-phospho-glyceroyl phosphate + NADH + H(+). It functions in the pathway carbohydrate degradation; glycolysis; pyruvate from D-glyceraldehyde 3-phosphate: step 1/5. Functionally, catalyzes the oxidative phosphorylation of glyceraldehyde 3-phosphate (G3P) to 1,3-bisphosphoglycerate (BPG) using the cofactor NAD. The first reaction step involves the formation of a hemiacetal intermediate between G3P and a cysteine residue, and this hemiacetal intermediate is then oxidized to a thioester, with concomitant reduction of NAD to NADH. The reduced NADH is then exchanged with the second NAD, and the thioester is attacked by a nucleophilic inorganic phosphate to produce BPG. The protein is Glyceraldehyde-3-phosphate dehydrogenase (gapA) of Buchnera aphidicola subsp. Schizaphis graminum (strain Sg).